The chain runs to 148 residues: Putative cyclin-dependent kinase inhibitor SPL2 (148 aa).

Residues S59 and S86 each carry the phosphoserine modification.

It is found in the cytoplasmic granule. It localises to the cytoplasm. Functionally, putative cyclin-dependent kinase (CDK) inhibitor necessary and sufficient for PHO pathway-dependent down-regulation of low-affinity phosphate transport. The protein is Putative cyclin-dependent kinase inhibitor SPL2 (SPL2) of Saccharomyces cerevisiae (strain ATCC 204508 / S288c) (Baker's yeast).